A 97-amino-acid chain; its full sequence is U6-theraphotoxin-Hhn1a 4 (97 aa).

The signal sequence occupies residues methionine 1–alanine 33. Positions serine 34–arginine 61 are excised as a propeptide. 3 cysteine pairs are disulfide-bonded: cysteine 63-cysteine 77, cysteine 70-cysteine 82, and cysteine 76-cysteine 89.

Belongs to the neurotoxin 10 (Hwtx-1) family. 12 (Hntx-12) subfamily. In terms of tissue distribution, expressed by the venom gland.

It localises to the secreted. In terms of biological role, ion channel inhibitor. The polypeptide is U6-theraphotoxin-Hhn1a 4 (Cyriopagopus hainanus (Chinese bird spider)).